Reading from the N-terminus, the 197-residue chain is Probable GTP-binding protein EngB (197 aa).

One can recognise an EngB-type G domain in the interval 25–197; it reads SAPEIAFAGR…VRDEFFKFTR (173 aa). GTP contacts are provided by residues 33 to 40, 60 to 64, 79 to 82, 146 to 149, and 177 to 179; these read GRSNVGKS, GCTRQ, DLPG, TKID, and MSI. Mg(2+) is bound by residues Ser40 and Thr62.

Belongs to the TRAFAC class TrmE-Era-EngA-EngB-Septin-like GTPase superfamily. EngB GTPase family. The cofactor is Mg(2+).

Necessary for normal cell division and for the maintenance of normal septation. This Wolbachia pipientis wMel protein is Probable GTP-binding protein EngB.